Reading from the N-terminus, the 631-residue chain is Chaperone protein HtpG (631 aa).

The tract at residues 1-338 is a; substrate-binding; that stretch reads MILKEQETLG…CNDLPLNISR (338 aa). The b stretch occupies residues 339 to 554; the sequence is EMLQHNRITQ…SNNMTTHMAK (216 aa). Positions 555–631 are c; it reads LIVASGQNKP…KLLNHDTIVN (77 aa).

This sequence belongs to the heat shock protein 90 family. As to quaternary structure, homodimer.

It localises to the cytoplasm. Its function is as follows. Molecular chaperone. Has ATPase activity. The polypeptide is Chaperone protein HtpG (Baumannia cicadellinicola subsp. Homalodisca coagulata).